Here is a 71-residue protein sequence, read N- to C-terminus: Large ribosomal subunit protein bL31 (71 aa).

4 residues coordinate Zn(2+): Cys-16, Cys-18, Cys-36, and Cys-39.

The protein belongs to the bacterial ribosomal protein bL31 family. Type A subfamily. As to quaternary structure, part of the 50S ribosomal subunit. Requires Zn(2+) as cofactor.

Functionally, binds the 23S rRNA. The protein is Large ribosomal subunit protein bL31 of Pseudothermotoga lettingae (strain ATCC BAA-301 / DSM 14385 / NBRC 107922 / TMO) (Thermotoga lettingae).